A 187-amino-acid chain; its full sequence is MSDDFELDTDDLKRRMDGAMANLKTEFASLRTGRASGSMLEPIQVEAYGQMTPINQIGTVNVPEPRMVTINVWDKSMVGKVEKAIRESGLGINPQLNGTIIMLPIPELNEERRRELTKVAGQYAEHARVAIRNVRRDGMDQIKKAKADGISEDDQKFWEAEVQELTDKMIKVVDAALETKQAEIMQV.

Belongs to the RRF family.

The protein resides in the cytoplasm. Its function is as follows. Responsible for the release of ribosomes from messenger RNA at the termination of protein biosynthesis. May increase the efficiency of translation by recycling ribosomes from one round of translation to another. The sequence is that of Ribosome-recycling factor from Ruegeria pomeroyi (strain ATCC 700808 / DSM 15171 / DSS-3) (Silicibacter pomeroyi).